The primary structure comprises 202 residues: Ras-related protein RIC1 (202 aa).

Residues 15 to 23 (GDSGVGKSC), 33 to 40 (YLESYIST), 63 to 67 (DTAGQ), 121 to 124 (NKCD), and 151 to 153 (SAK) contribute to the GTP site. Residues 37 to 45 (YISTIGVDF) carry the Effector region motif. Residues 174 to 185 (ASQPATNASKPA) show a composition bias toward polar residues. A disordered region spans residues 174–202 (ASQPATNASKPATVQMRGQPVAQQSSCCS). Residues cysteine 200 and cysteine 201 are each lipidated (S-geranylgeranyl cysteine).

Belongs to the small GTPase superfamily. Rab family.

The protein resides in the cell membrane. In terms of biological role, possesses GTPase activity. The polypeptide is Ras-related protein RIC1 (RIC1) (Oryza sativa subsp. japonica (Rice)).